We begin with the raw amino-acid sequence, 122 residues long: MSAAVVKPFKIFNDFENKENIDPLTGICSNTKPNIFTSKKRVPLRDITPVTTKYPTSPKKSRQVAVDLASNYIPPVFNLQISSNVPATKKPINNGFNFINGNSNGSFSIYHDVPTSSVKTIR.

This is an uncharacterized protein from Dictyostelium discoideum (Social amoeba).